The chain runs to 372 residues: Ribosomal RNA small subunit methyltransferase H (372 aa).

Residues 44–46 (GGH), aspartate 63, leucine 97, aspartate 111, and glutamine 118 contribute to the S-adenosyl-L-methionine site. The segment covering 315–334 (RAAERLDPTAEQRRRTDRER) has biased composition (basic and acidic residues). A disordered region spans residues 315-372 (RAAERLDPTAEQRRRTDRERYRRRVRAMHQPGTGSAVRRPTPGDDGTGTDEEGEGHDS). Positions 361–372 (TGTDEEGEGHDS) are enriched in acidic residues.

The protein belongs to the methyltransferase superfamily. RsmH family.

The protein localises to the cytoplasm. It carries out the reaction cytidine(1402) in 16S rRNA + S-adenosyl-L-methionine = N(4)-methylcytidine(1402) in 16S rRNA + S-adenosyl-L-homocysteine + H(+). Specifically methylates the N4 position of cytidine in position 1402 (C1402) of 16S rRNA. This is Ribosomal RNA small subunit methyltransferase H from Salinispora arenicola (strain CNS-205).